The chain runs to 453 residues: uncharacterized protein (453 aa).

Functionally, the presence of the two linear plasmids, termed pGKL1 and pGKL2, in strains of Kluyveromyces lactis confers the killer phenotype to the host cell, by promoting the secretion of a toxin able to inhibit the growth of sensitive strains. This is an uncharacterized protein from Kluyveromyces lactis (strain ATCC 8585 / CBS 2359 / DSM 70799 / NBRC 1267 / NRRL Y-1140 / WM37) (Yeast).